The following is a 287-amino-acid chain: Mitochondrial glycine transporter B (287 aa).

Solcar repeat units follow at residues 7 to 97 (HPAL…LKQH), 104 to 188 (PSAG…AKKA), and 198 to 282 (IAPL…LMAR). The next 6 helical transmembrane spans lie at 13 to 38 (FMCGSLSGTCSTLLFQPLDLVKTRLQ), 72 to 98 (GVSPSFMRCIPGVGIYFSTFYSLKQHY), 110 to 135 (VLLGAGARCVAGVAMLPFTVIKTRFE), 163 to 186 (GLTATLLRDAPFSGIYVMFYSQAK), 202 to 228 (VNFGCGVVAGILASLATQPADVIKTHM), and 257 to 275 (GAVPRSLRRTLMAAMAWTV).

The protein belongs to the mitochondrial carrier (TC 2.A.29) family. SLC25A38 subfamily. In terms of tissue distribution, at 24 hours post-fertilization, expressed predominantly in posterior blood island, posterior cardinal vein and circulating blood. At 34 hours post-fertilization, becomes restricted to posterior blood island and circulating blood.

The protein localises to the mitochondrion inner membrane. It catalyses the reaction glycine(in) = glycine(out). Functionally, mitochondrial glycine transporter that imports glycine into the mitochondrial matrix. Plays an important role in providing glycine for the first enzymatic step in heme biosynthesis, the condensation of glycine with succinyl-CoA to produce 5-aminolevulinate (ALA) in the mitochondrial matrix. Required during erythropoiesis. May play a role as pro-apoptotic protein that induces caspase-dependent apoptosis. The protein is Mitochondrial glycine transporter B (slc25a38b) of Danio rerio (Zebrafish).